A 616-amino-acid polypeptide reads, in one-letter code: Chaperone protein HscA homolog (616 aa).

The protein belongs to the heat shock protein 70 family.

In terms of biological role, chaperone involved in the maturation of iron-sulfur cluster-containing proteins. Has a low intrinsic ATPase activity which is markedly stimulated by HscB. The sequence is that of Chaperone protein HscA homolog from Aliivibrio fischeri (strain MJ11) (Vibrio fischeri).